The primary structure comprises 605 residues: Probable potassium transport system protein Kup (605 aa).

The next 12 helical transmembrane spans lie at Gly-17–Leu-37, Val-45–Ala-65, Ile-96–Ile-116, Leu-140–Lys-160, Val-165–Leu-185, Gly-211–Leu-231, Ala-246–Leu-266, Leu-286–Ile-306, Ile-338–Phe-358, Ala-367–Phe-387, Trp-394–Leu-414, and Leu-417–Ile-437.

The protein belongs to the HAK/KUP transporter (TC 2.A.72) family.

The protein resides in the cell inner membrane. The catalysed reaction is K(+)(in) + H(+)(in) = K(+)(out) + H(+)(out). Its function is as follows. Transport of potassium into the cell. Likely operates as a K(+):H(+) symporter. This is Probable potassium transport system protein Kup from Geotalea uraniireducens (strain Rf4) (Geobacter uraniireducens).